Here is a 288-residue protein sequence, read N- to C-terminus: MILLCVISRTVLLNIRKRDIRFFTYFEFLLIAALHYGILILFLPVTALLLRTKEQSWYTIFQAVTEPVVLSAYKVTFLTAALAAVINAFLGLILAWILVRYRFPGKNFLDAAVDLPFALPTSVGGLTLMTVYSDKGWMGPICSWLGIKIAFSRLGVLIAMMFVSLPFIVRTIQPVLQSMEEETEEAAWCIGASPWTTFWNVLFPPMISPLLTGTALGFSRAIGEYGSIVLVASNIPMKDLVVSVLIFQRLEQYDYKGATAIASVVLLVSFAILLIINYIYLKRKSLTR.

7 consecutive transmembrane segments (helical) span residues 28–48, 77–97, 111–131, 149–169, 198–218, 227–247, and 261–281; these read FLLI…VTAL, FLTA…LAWI, AAVD…LMTV, IAFS…PFIV, FWNV…ALGF, SIVL…VLIF, and IASV…YIYL. An ABC transmembrane type-1 domain is found at 73 to 276; that stretch reads YKVTFLTAAL…LVSFAILLII (204 aa).

The protein belongs to the binding-protein-dependent transport system permease family. CysTW subfamily.

It localises to the plastid. The protein resides in the chloroplast membrane. Part of the ABC transporter complex cysAWTP (TC 3.A.1.6.1) involved in sulfate/thiosulfate import. Probably responsible for the translocation of the substrate across the membrane. This is Probable sulfate transport system permease protein cysT (cysT) from Zygnema circumcarinatum (Green alga).